Consider the following 401-residue polypeptide: uncharacterized protein (401 aa).

Lysine 242 is subject to N6-(pyridoxal phosphate)lysine.

It belongs to the class-I pyridoxal-phosphate-dependent aminotransferase family. Homodimer. Requires pyridoxal 5'-phosphate as cofactor.

Its subcellular location is the cytoplasm. This is an uncharacterized protein from Saccharolobus solfataricus (strain ATCC 35092 / DSM 1617 / JCM 11322 / P2) (Sulfolobus solfataricus).